Reading from the N-terminus, the 154-residue chain is 3-dehydroquinate dehydratase (154 aa).

The active-site Proton acceptor is the Y23. The substrate site is built by N74, H80, and D87. Residue H100 is the Proton donor of the active site. Substrate-binding positions include 101-102 (LS) and R111.

The protein belongs to the type-II 3-dehydroquinase family. In terms of assembly, homododecamer.

The enzyme catalyses 3-dehydroquinate = 3-dehydroshikimate + H2O. It participates in metabolic intermediate biosynthesis; chorismate biosynthesis; chorismate from D-erythrose 4-phosphate and phosphoenolpyruvate: step 3/7. Catalyzes a trans-dehydration via an enolate intermediate. The chain is 3-dehydroquinate dehydratase from Actinobacillus pleuropneumoniae serotype 5b (strain L20).